The primary structure comprises 478 residues: Zinc metalloproteinase/disintegrin (478 aa).

A signal peptide spans 1–20 (MIQVLLVTICLAAFPYQGSS). The propeptide occupies 21 to 187 (IILESGNVND…PIKKASDLNL (167 aa)). A Peptidase M12B domain is found at 193–389 (RYVELFIVVD…QKPQCILKKP (197 aa)). 3 cysteine pairs are disulfide-bonded: cysteine 304–cysteine 384, cysteine 344–cysteine 368, and cysteine 346–cysteine 351. Residue histidine 329 participates in Zn(2+) binding. Glutamate 330 is a catalytic residue. 2 residues coordinate Zn(2+): histidine 333 and histidine 339. A propeptide spanning residues 390 to 407 (LRTDTVSTPVSGNELLEA) is cleaved from the precursor. The region spanning 397 to 478 (TPVSGNELLE…ADCPRNGLYG (82 aa)) is the Disintegrin domain. 6 disulfides stabilise this stretch: cysteine 411-cysteine 426, cysteine 413-cysteine 421, cysteine 420-cysteine 443, cysteine 434-cysteine 440, cysteine 439-cysteine 464, and cysteine 452-cysteine 471. The short motif at 456–458 (MVD) is the Cell attachment site; atypical (MVD) element.

This sequence belongs to the venom metalloproteinase (M12B) family. P-II subfamily. P-IIa sub-subfamily. In terms of assembly, monomer (disintegrin). Zn(2+) serves as cofactor. Expressed by the venom gland.

It is found in the secreted. It carries out the reaction Cleavage of 3-Asn-|-Gln-4, 9-Ser-|-His-10 and 14-Ala-|-Leu-15 bonds in insulin B chain and 14-Tyr-|-Gln-15 and 8-Thr-|-Ser-9 in A chain. Cleaves type IV collagen at 73-Ala-|-Gln-74 in alpha1-(IV) and at 7-Gly-|-Leu-8 in alpha2-(IV).. Functionally, snake venom zinc metalloproteinase that causes hemorrhage by provoking the degradation of the sub-endothelial matrix proteins (fibronectin, laminin, type IV collagen, nidogen, and gelatins). Its function is as follows. Potent inhibitor of both collagen- (IC(50)=4 nM) and ADP-induced (IC(50)=8 nM) platelet aggregation. May act by binding to the platelet receptor GPIIb/GPIIIa (ITGA2B/ITGB3). The protein is Zinc metalloproteinase/disintegrin of Crotalus atrox (Western diamondback rattlesnake).